Consider the following 299-residue polypeptide: Probable lipid kinase YegS-like (299 aa).

The DAGKc domain maps to 2–133 (ATYPESLLIL…VDIAQVNDKT (132 aa)). Residues threonine 40, 66–72 (GDGTINE), and threonine 95 each bind ATP. Mg(2+) contacts are provided by leucine 215, aspartate 218, and leucine 220. The active-site Proton acceptor is the glutamate 271.

The protein belongs to the diacylglycerol/lipid kinase family. YegS lipid kinase subfamily. The cofactor is Mg(2+). Requires Ca(2+) as cofactor.

The protein resides in the cytoplasm. Its function is as follows. Probably phosphorylates lipids; the in vivo substrate is unknown. This chain is Probable lipid kinase YegS-like, found in Enterobacter sp. (strain 638).